Consider the following 183-residue polypeptide: MTSKVANTEVAQPYAQALLSIAKSKSLTEEFGTDARTLLNLLAENQQLRNFIDNPFIAAENKKALIKQILSEASPYLRNFLLLLVDKRRIFFLEEILQQYLALLRQLNQTVLAEVTSAVALTEDQQQAVKEKVLALTKARQVELATKVDSDLIGGVIIKVGSQVIDSSIRGQLRRLSLRLSNS.

Belongs to the ATPase delta chain family. F-type ATPases have 2 components, F(1) - the catalytic core - and F(0) - the membrane proton channel. F(1) has five subunits: alpha(3), beta(3), gamma(1), delta(1), epsilon(1). CF(0) has four main subunits: a(1), b(1), b'(1) and c(10-14). The alpha and beta chains form an alternating ring which encloses part of the gamma chain. F(1) is attached to F(0) by a central stalk formed by the gamma and epsilon chains, while a peripheral stalk is formed by the delta, b and b' chains.

The protein localises to the cellular thylakoid membrane. Functionally, f(1)F(0) ATP synthase produces ATP from ADP in the presence of a proton or sodium gradient. F-type ATPases consist of two structural domains, F(1) containing the extramembraneous catalytic core and F(0) containing the membrane proton channel, linked together by a central stalk and a peripheral stalk. During catalysis, ATP synthesis in the catalytic domain of F(1) is coupled via a rotary mechanism of the central stalk subunits to proton translocation. This protein is part of the stalk that links CF(0) to CF(1). It either transmits conformational changes from CF(0) to CF(1) or is implicated in proton conduction. This chain is ATP synthase subunit delta, found in Trichormus variabilis (strain ATCC 29413 / PCC 7937) (Anabaena variabilis).